Reading from the N-terminus, the 458-residue chain is Argininosuccinate lyase (458 aa).

The protein belongs to the lyase 1 family. Argininosuccinate lyase subfamily.

It is found in the cytoplasm. The enzyme catalyses 2-(N(omega)-L-arginino)succinate = fumarate + L-arginine. Its pathway is amino-acid biosynthesis; L-arginine biosynthesis; L-arginine from L-ornithine and carbamoyl phosphate: step 3/3. This chain is Argininosuccinate lyase, found in Heliobacterium mobile (Heliobacillus mobilis).